The primary structure comprises 247 residues: Carboxy-S-adenosyl-L-methionine synthase (247 aa).

S-adenosyl-L-methionine-binding positions include Tyr-39, 64–66 (GCS), 89–90 (DN), 117–118 (DI), Asn-132, and Arg-199.

Belongs to the class I-like SAM-binding methyltransferase superfamily. Cx-SAM synthase family. As to quaternary structure, homodimer.

The catalysed reaction is prephenate + S-adenosyl-L-methionine = carboxy-S-adenosyl-L-methionine + 3-phenylpyruvate + H2O. Functionally, catalyzes the conversion of S-adenosyl-L-methionine (SAM) to carboxy-S-adenosyl-L-methionine (Cx-SAM). The polypeptide is Carboxy-S-adenosyl-L-methionine synthase (Klebsiella pneumoniae (strain 342)).